A 768-amino-acid chain; its full sequence is Phosphoribosylformylglycinamidine synthase subunit PurL (768 aa).

The active site involves His-53. Position 56 (Tyr-56) interacts with ATP. Glu-98 is a Mg(2+) binding site. Substrate-binding positions include Ser-99 to His-102 and Arg-121. His-100 serves as the catalytic Proton acceptor. Asp-122 contributes to the Mg(2+) binding site. Residue Gln-253 coordinates substrate. Residue Asp-285 participates in Mg(2+) binding. Glu-328 to Gln-330 is a substrate binding site. Positions 516 and 561 each coordinate ATP. Asn-562 is a binding site for Mg(2+). Ser-564 serves as a coordination point for substrate.

The protein belongs to the FGAMS family. In terms of assembly, monomer. Part of the FGAM synthase complex composed of 1 PurL, 1 PurQ and 2 PurS subunits.

The protein resides in the cytoplasm. The catalysed reaction is N(2)-formyl-N(1)-(5-phospho-beta-D-ribosyl)glycinamide + L-glutamine + ATP + H2O = 2-formamido-N(1)-(5-O-phospho-beta-D-ribosyl)acetamidine + L-glutamate + ADP + phosphate + H(+). The protein operates within purine metabolism; IMP biosynthesis via de novo pathway; 5-amino-1-(5-phospho-D-ribosyl)imidazole from N(2)-formyl-N(1)-(5-phospho-D-ribosyl)glycinamide: step 1/2. In terms of biological role, part of the phosphoribosylformylglycinamidine synthase complex involved in the purines biosynthetic pathway. Catalyzes the ATP-dependent conversion of formylglycinamide ribonucleotide (FGAR) and glutamine to yield formylglycinamidine ribonucleotide (FGAM) and glutamate. The FGAM synthase complex is composed of three subunits. PurQ produces an ammonia molecule by converting glutamine to glutamate. PurL transfers the ammonia molecule to FGAR to form FGAM in an ATP-dependent manner. PurS interacts with PurQ and PurL and is thought to assist in the transfer of the ammonia molecule from PurQ to PurL. The chain is Phosphoribosylformylglycinamidine synthase subunit PurL from Methanothrix thermoacetophila (strain DSM 6194 / JCM 14653 / NBRC 101360 / PT) (Methanosaeta thermophila).